We begin with the raw amino-acid sequence, 176 residues long: NAD(P)H-quinone oxidoreductase subunit 6, chloroplastic (176 aa).

5 helical membrane-spanning segments follow: residues Phe10 to Thr30, Ile33 to Ala53, Ala61 to Ile81, Leu92 to Ile112, and Phe152 to Ala172.

It belongs to the complex I subunit 6 family. NDH is composed of at least 16 different subunits, 5 of which are encoded in the nucleus.

The protein resides in the plastid. The protein localises to the chloroplast thylakoid membrane. The enzyme catalyses a plastoquinone + NADH + (n+1) H(+)(in) = a plastoquinol + NAD(+) + n H(+)(out). It catalyses the reaction a plastoquinone + NADPH + (n+1) H(+)(in) = a plastoquinol + NADP(+) + n H(+)(out). Functionally, NDH shuttles electrons from NAD(P)H:plastoquinone, via FMN and iron-sulfur (Fe-S) centers, to quinones in the photosynthetic chain and possibly in a chloroplast respiratory chain. The immediate electron acceptor for the enzyme in this species is believed to be plastoquinone. Couples the redox reaction to proton translocation, and thus conserves the redox energy in a proton gradient. This is NAD(P)H-quinone oxidoreductase subunit 6, chloroplastic (ndhG) from Fagopyrum esculentum subsp. ancestrale (Wild buckwheat).